Reading from the N-terminus, the 86-residue chain is Neuropeptide-like 2 (86 aa).

Residues 1–19 (MAKLAICILVFALFALALS) form the signal peptide. 2 consecutive propeptides follow at residues 20 to 34 (ARVPREESNPAQEFL) and 45 to 86 (IEKL…AAST).

As to expression, hemolymph (at protein level).

It is found in the secreted. The sequence is that of Neuropeptide-like 2 (Nplp2) from Drosophila melanogaster (Fruit fly).